The sequence spans 250 residues: 5'-nucleotidase SurE (250 aa).

A divalent metal cation-binding residues include Asp-8, Asp-9, Ser-39, and Asn-91.

The protein belongs to the SurE nucleotidase family. It depends on a divalent metal cation as a cofactor.

It is found in the cytoplasm. It catalyses the reaction a ribonucleoside 5'-phosphate + H2O = a ribonucleoside + phosphate. In terms of biological role, nucleotidase that shows phosphatase activity on nucleoside 5'-monophosphates. In Leptospira borgpetersenii serovar Hardjo-bovis (strain JB197), this protein is 5'-nucleotidase SurE.